We begin with the raw amino-acid sequence, 351 residues long: Photosystem II D2 protein (351 aa).

The helical transmembrane segment at C39–T59 threads the bilayer. Position 116 (H116) interacts with chlorophyll a. The helical transmembrane segment at G123 to P139 threads the bilayer. Residues Q128 and N141 each contribute to the pheophytin a site. The helical transmembrane segment at V151–A164 threads the bilayer. Residue H196 coordinates chlorophyll a. Residues G206–E226 form a helical membrane-spanning segment. 2 residues coordinate a plastoquinone: H213 and F260. H213 provides a ligand contact to Fe cation. Position 267 (H267) interacts with Fe cation. Residues G277–R293 traverse the membrane as a helical segment.

It belongs to the reaction center PufL/M/PsbA/D family. PSII is composed of 1 copy each of membrane proteins PsbA, PsbB, PsbC, PsbD, PsbE, PsbF, PsbH, PsbI, PsbJ, PsbK, PsbL, PsbM, PsbT, PsbX, PsbY, PsbZ, Psb30/Ycf12, at least 3 peripheral proteins of the oxygen-evolving complex and a large number of cofactors. It forms dimeric complexes. Requires The D1/D2 heterodimer binds P680, chlorophylls that are the primary electron donor of PSII, and subsequent electron acceptors. It shares a non-heme iron and each subunit binds pheophytin, quinone, additional chlorophylls, carotenoids and lipids. There is also a Cl(-1) ion associated with D1 and D2, which is required for oxygen evolution. The PSII complex binds additional chlorophylls, carotenoids and specific lipids. as cofactor.

It is found in the plastid. The protein resides in the chloroplast thylakoid membrane. It catalyses the reaction 2 a plastoquinone + 4 hnu + 2 H2O = 2 a plastoquinol + O2. Its function is as follows. Photosystem II (PSII) is a light-driven water:plastoquinone oxidoreductase that uses light energy to abstract electrons from H(2)O, generating O(2) and a proton gradient subsequently used for ATP formation. It consists of a core antenna complex that captures photons, and an electron transfer chain that converts photonic excitation into a charge separation. The D1/D2 (PsbA/PsbD) reaction center heterodimer binds P680, the primary electron donor of PSII as well as several subsequent electron acceptors. D2 is needed for assembly of a stable PSII complex. The sequence is that of Photosystem II D2 protein from Cyanidioschyzon merolae (strain NIES-3377 / 10D) (Unicellular red alga).